A 371-amino-acid chain; its full sequence is Proton-coupled zinc antiporter SLC30A2 (371 aa).

The Cytoplasmic portion of the chain corresponds to 1-69 (MQTMDKQNLL…DPEKQRARRK (69 aa)). The Mitochondrial localization signal motif lies at 47-50 (HYCH). C49 contributes to the Zn(2+) binding site. Residues 70-90 (LYVASAICLVFMIGEIIGGYL) traverse the membrane as a helical segment. Topologically, residues 91–99 (AQSLAIMTD) are lumenal. The helical transmembrane segment at 100–120 (AAHLLTDFASMLISLFALWVS) threads the bilayer. Zn(2+)-binding residues include H102 and D106. The Cytoplasmic segment spans residues 121 to 136 (SRPATKTMNFGWHRAE). The helical transmembrane segment at 137 to 157 (ILGALLSVLSIWVVTGVLVYL) threads the bilayer. Residues 158–172 (AVQRLISGDYEIKGD) lie on the Lumenal side of the membrane. A helical transmembrane segment spans residues 173-193 (TMLITSGCAVAVNLIMGLALH). Over 194-219 (QSGHGHSHGNSRDDSSQQQNPSVRAA) the chain is Cytoplasmic. The helical transmembrane segment at 220-240 (FIHVIGDLLQSVGVLVAAYII) threads the bilayer. Zn(2+) contacts are provided by H222 and D226. Residues 241–248 (YFKPEYKY) lie on the Lumenal side of the membrane. The chain crosses the membrane as a helical span at residues 249–269 (VDPICTFLFSILVLGTTLTIL). Residues 270–303 (RDVILVLMEGTPKGVDFTTVKNLLLSVDGVEALH) are Cytoplasmic-facing. The Lysosomal targeting motif signature appears at 293–294 (LL). At S295 the chain carries Phosphoserine. Zn(2+) is bound by residues H303, H320, and E354. A helical transmembrane segment spans residues 304–324 (SLHIWALTVAQPVLSVHIAIA). The Lumenal segment spans residues 325–371 (QNADAQAVLKVARDRLQGKFNFHTMTIQIEKYSEDMKNCQACQGPLE).

It belongs to the cation diffusion facilitator (CDF) transporter (TC 2.A.4) family. SLC30A subfamily. As to quaternary structure, homodimer. Interacts (via lysosomal targeting motif) with AP3D1; in AP-3-mediated transport to lysosomes. Interacts with TMEM163. In terms of processing, phosphorylated at Ser-295. Phosphorylation at Ser-295 prevents localization to lysosomes. Dephosphorylation of Ser-295 which triggers localization to lysosomes, accumulation of zinc into lysosomes and lysosomal-mediated cell death is induced by TNF-alpha.

The protein localises to the cytoplasmic vesicle. Its subcellular location is the secretory vesicle membrane. It localises to the zymogen granule membrane. The protein resides in the endosome membrane. It is found in the lysosome membrane. The protein localises to the mitochondrion inner membrane. Its subcellular location is the cell membrane. It catalyses the reaction Zn(2+)(in) + 2 H(+)(out) = Zn(2+)(out) + 2 H(+)(in). Electroneutral proton-coupled antiporter concentrating zinc ions into a variety of intracellular organelles including endosomes, zymogen granules and mitochondria. Thereby, plays a crucial role in cellular zinc homeostasis to confer upon cells protection against its potential cytotoxicity. Regulates the zinc concentration of milk, through the transport of zinc ions into secretory vesicles of mammary cells. By concentrating zinc ions into lysosomes participates to lysosomal-mediated cell death during early mammary gland involution. Functionally, electroneutral proton-coupled antiporter mediating the efflux of zinc ions through the plasma membrane. This is Proton-coupled zinc antiporter SLC30A2 from Mus musculus (Mouse).